Reading from the N-terminus, the 738-residue chain is Adhesion G protein-coupled receptor L4 (738 aa).

The signal sequence occupies residues 1–19; the sequence is MRLLLLLVGLSTLLNHSYT. The 37-residue stretch at 20 to 56 folds into the EGF-like 1 domain; that stretch reads QNCKTPCLPNAKCEVLDEVAACFCSTGYTGNGITICE. The Extracellular portion of the chain corresponds to 20-480; it reads QNCKTPCLPN…DYNILTRITQ (461 aa). 9 cysteine pairs are disulfide-bonded: cysteine 22–cysteine 32, cysteine 26–cysteine 41, cysteine 43–cysteine 55, cysteine 61–cysteine 73, cysteine 67–cysteine 82, cysteine 84–cysteine 105, cysteine 111–cysteine 123, cysteine 117–cysteine 132, and cysteine 134–cysteine 155. Positions 57 to 106 constitute an EGF-like 2; calcium-binding domain; it reads DVDECNETSVCGDHAVCENTNGGFSCFCVEGYQTSTGKTQFTPNDGSYCQ. N-linked (GlcNAc...) asparagine glycosylation is present at asparagine 62. An EGF-like 3; calcium-binding domain is found at 107–156; that stretch reads DVDECNETSVCGDHAVCENTNGGFSCFCVEGYQTSTGKTQFTPNDGSYCQ. N-linked (GlcNAc...) asparagine glycosylation occurs at asparagine 112. Residues asparagine 175, asparagine 226, asparagine 297, asparagine 421, asparagine 429, and asparagine 443 are each glycosylated (N-linked (GlcNAc...) asparagine). In terms of domain architecture, GAIN-B spans 292–467; that stretch reads TQFDMNSTDL…AILMSPSTSI (176 aa). Disulfide bonds link cysteine 417–cysteine 449 and cysteine 437–cysteine 451. The tract at residues 417-467 is GPS; it reads CAFWNYSVDDMNNGSWSSEGCELTYSNDTHTSCRCSHLTHFAILMSPSTSI. The chain crosses the membrane as a helical span at residues 481-501; that stretch reads LGIIISLICLAICIFTFWFFS. Residues 502–522 are Cytoplasmic-facing; the sequence is EIQSTRTTIHKNLCCSLFLAQ. The helical transmembrane segment at 523-543 threads the bilayer; the sequence is LVFLVGININTNKLVCSIIAG. Residues 544 to 547 are Extracellular-facing; it reads LLHY. A helical membrane pass occupies residues 548 to 568; that stretch reads FFLAAFAWMCIEGIYLYLIVV. Topologically, residues 569–580 are cytoplasmic; sequence GLIYNKGFLHKN. A helical membrane pass occupies residues 581 to 601; that stretch reads FYIFGYLSPAVVVGFSASLGY. Residues 602-621 lie on the Extracellular side of the membrane; it reads RYYGTTKVCWLSTENNFIWS. Residues 622-642 form a helical membrane-spanning segment; sequence FIGPACLIILVNLLAFGVIIY. Topologically, residues 643-666 are cytoplasmic; sequence KVFRHTAGLKPEVSCYENIRSCAR. Residues 667–687 traverse the membrane as a helical segment; sequence GALALLFLLGTTWTFGVLHVV. Residues 688-694 lie on the Extracellular side of the membrane; it reads HASVVTA. The chain crosses the membrane as a helical span at residues 695 to 715; that stretch reads YLFTVSNAFQGMFIFLFLCVL. The Cytoplasmic segment spans residues 716–738; sequence SRKIQEEYYRLFKNVPCCFECLR.

It belongs to the G-protein coupled receptor 2 family. Adhesion G-protein coupled receptor (ADGR) subfamily. As to quaternary structure, heterodimer of 2 chains generated by proteolytic processing; the large extracellular N-terminal fragment and the membrane-bound C-terminal fragment predominantly remain associated and non-covalently linked. Proteolytically cleaved into 2 subunits, an extracellular alpha subunit and a seven-transmembrane subunit. In terms of processing, glycosylated. In terms of tissue distribution, abundantly expressed in heart, lung, and kidney. Less evident expression is observed in brain, skeletal muscle, liver and spleen. No expression is detected in testis.

Its subcellular location is the cell membrane. Endothelial orphan receptor that acts as a key regulator of angiogenesis. In Rattus norvegicus (Rat), this protein is Adhesion G protein-coupled receptor L4 (Adgrl4).